Here is a 392-residue protein sequence, read N- to C-terminus: NADH-quinone oxidoreductase subunit D 1 (392 aa).

The protein belongs to the complex I 49 kDa subunit family. NDH-1 is composed of 14 different subunits. Subunits NuoB, C, D, E, F, and G constitute the peripheral sector of the complex.

It is found in the cell inner membrane. The enzyme catalyses a quinone + NADH + 5 H(+)(in) = a quinol + NAD(+) + 4 H(+)(out). Functionally, NDH-1 shuttles electrons from NADH, via FMN and iron-sulfur (Fe-S) centers, to quinones in the respiratory chain. The immediate electron acceptor for the enzyme in this species is believed to be a menaquinone. Couples the redox reaction to proton translocation (for every two electrons transferred, four hydrogen ions are translocated across the cytoplasmic membrane), and thus conserves the redox energy in a proton gradient. This Cytophaga hutchinsonii (strain ATCC 33406 / DSM 1761 / CIP 103989 / NBRC 15051 / NCIMB 9469 / D465) protein is NADH-quinone oxidoreductase subunit D 1.